We begin with the raw amino-acid sequence, 400 residues long: Aspartate/prephenate aminotransferase (400 aa).

Residues Gly-39, Trp-125, and Asn-175 each coordinate L-aspartate. Residue Lys-239 is modified to N6-(pyridoxal phosphate)lysine. Residue Arg-375 coordinates L-aspartate.

The protein belongs to the class-I pyridoxal-phosphate-dependent aminotransferase family. Homodimer. The cofactor is pyridoxal 5'-phosphate.

It localises to the cytoplasm. The enzyme catalyses L-aspartate + 2-oxoglutarate = oxaloacetate + L-glutamate. The catalysed reaction is L-arogenate + 2-oxoglutarate = prephenate + L-glutamate. Functionally, catalyzes the reversible conversion of aspartate and 2-oxoglutarate to glutamate and oxaloacetate. Can also transaminate prephenate in the presence of glutamate. Required for symbiotic nitrogen fixation. The chain is Aspartate/prephenate aminotransferase from Rhizobium meliloti (strain 1021) (Ensifer meliloti).